A 395-amino-acid polypeptide reads, in one-letter code: F-box protein At5g46170 (395 aa).

The region spanning 24 to 72 (IDHFDHLPDSILLLVFNKIGDVKALGRCCVVSRRFHSLVPQVDNVVVRV) is the F-box domain. The interval 122–158 (TKRSSSSCGGSGSSSSSLSISGDDDGGEIEQGGVTHH) is disordered. A compositionally biased stretch (low complexity) spans 125–142 (SSSSCGGSGSSSSSLSIS).

This Arabidopsis thaliana (Mouse-ear cress) protein is F-box protein At5g46170.